Consider the following 204-residue polypeptide: Protein LURP-one-related 14 (204 aa).

It belongs to the LOR family.

Functionally, might be related to the phospholipid scramblase and tubby-like superfamily of membrane tethered transcription factors. The sequence is that of Protein LURP-one-related 14 from Arabidopsis thaliana (Mouse-ear cress).